The following is a 120-amino-acid chain: MTTQLKDINGAYAKAKYIRMSPRKVRRVLDQIRGRSYREALIVLEFMPYRACEPVLKVLRSAVANAETNRGLDPVDLVVSHAYADQGPRLKRFRPRAQGRAYQIQKPTCHITIAVSAEAS.

It belongs to the universal ribosomal protein uL22 family. In terms of assembly, part of the 50S ribosomal subunit.

Functionally, this protein binds specifically to 23S rRNA; its binding is stimulated by other ribosomal proteins, e.g. L4, L17, and L20. It is important during the early stages of 50S assembly. It makes multiple contacts with different domains of the 23S rRNA in the assembled 50S subunit and ribosome. The globular domain of the protein is located near the polypeptide exit tunnel on the outside of the subunit, while an extended beta-hairpin is found that lines the wall of the exit tunnel in the center of the 70S ribosome. This is Large ribosomal subunit protein uL22 from Acaryochloris marina (strain MBIC 11017).